Here is a 1207-residue protein sequence, read N- to C-terminus: Ras GTPase-activating protein gap-2 (1207 aa).

Disordered stretches follow at residues 1–29 (MKVI…SCTK) and 221–316 (RMSS…GSLR). The PH domain maps to 40–383 (PPICHGWLIV…WMENLRKTMN (344 aa)). A compositionally biased stretch (low complexity) spans 223-236 (SSSSHNLSTRLSGS). Composition is skewed to polar residues over residues 237–247 (TQNLNQPTNAY) and 286–297 (ASNTPSRDSSLY). A C2 domain is found at 374-490 (WMENLRKTMN…SSRSPVERWY (117 aa)). The segment covering 495–504 (SHSDSGTSRI) has biased composition (polar residues). The tract at residues 495–516 (SHSDSGTSRIASALGGKSSSQE) is disordered. Positions 579 to 789 (NLAKEFLCDL…HRMKDFLLRI (211 aa)) constitute a Ras-GAP domain. Disordered regions lie at residues 856–903 (GVFH…LGRS), 923–1013 (FQTP…SSSS), 1086–1107 (ATGG…RASR), and 1163–1207 (LKSK…VVPN). Composition is skewed to polar residues over residues 862–876 (MVQQ…SPQQ) and 891–903 (TPPT…LGRS). Over residues 939–953 (TGTSSSRTSDKTTSS) the composition is skewed to low complexity. Residues 955–972 (EIRDDTDSDFELREDRGR) are compositionally biased toward basic and acidic residues. Over residues 985–1013 (ASPSSSQQASSGYLSNNPSRSSYSNSSSS) the composition is skewed to low complexity. Over residues 1181 to 1207 (SGASEDSYDSLSSLDRPSRQSLVVVPN) the composition is skewed to low complexity.

Mainly expressed in gonads and vulval cells. Isoform c in expressed in pharyngeal epithelial cells and several rectal/blast cells in the tail region. Isoform f is weakly expressed in four cells symmetrically located in the vulval region. Isoform g is strongly expressed in the pharyngeal muscle cells m6 in addition to several cells in the tail region.

It localises to the cytoplasm. Functionally, GTPase-activating protein, which acts as a negative regulator for the member of the Ras family let-60. Probably decreases the signaling activity of Ras by stimulating its intrinsic GTPase activity, thereby lowering the levels of GTP-bound, active Ras. The different isoforms may play a distinct role in specific tissues. This chain is Ras GTPase-activating protein gap-2 (gap-2), found in Caenorhabditis elegans.